The sequence spans 503 residues: Glucose-6-phosphate 1-dehydrogenase (503 aa).

NADP(+) is bound by residues 14–21 (GASGDLSK), Arg-49, and Lys-158. Residues Lys-158, 188–192 (HYLGK), Glu-226, and Asp-245 contribute to the D-glucose 6-phosphate site. Catalysis depends on His-250, which acts as the Proton acceptor. Lys-341 serves as a coordination point for NADP(+). D-glucose 6-phosphate is bound at residue Lys-344. Residues Lys-350, Arg-354, and Arg-376 each coordinate NADP(+). Gln-378 provides a ligand contact to D-glucose 6-phosphate. NADP(+) contacts are provided by residues 384–386 (YLK), Arg-471, and Tyr-487.

This sequence belongs to the glucose-6-phosphate dehydrogenase family.

The enzyme catalyses D-glucose 6-phosphate + NADP(+) = 6-phospho-D-glucono-1,5-lactone + NADPH + H(+). It functions in the pathway carbohydrate degradation; pentose phosphate pathway; D-ribulose 5-phosphate from D-glucose 6-phosphate (oxidative stage): step 1/3. Its function is as follows. Catalyzes the rate-limiting step of the oxidative pentose-phosphate pathway, which represents a route for the dissimilation of carbohydrates besides glycolysis. The main function of this enzyme is to provide reducing power (NADPH) and pentose phosphates for fatty acid and nucleic acid synthesis. The G6PDH activity is required to cope with hydrogen peroxide and potassium bisulfite stresses and plays a role in adaptation to conditions used in wine fermentations. This is Glucose-6-phosphate 1-dehydrogenase from Hanseniaspora uvarum (Yeast).